The sequence spans 539 residues: DnaJ homolog subfamily C member 7 homolog (539 aa).

TPR repeat units lie at residues 3-36 (HEEC…SNGT), 75-108 (IKGY…DPRN), 189-222 (PEYL…DPDY), 235-268 (IESK…DPKL), 273-306 (SQLY…DPNY), and 307-340 (GKAY…DPEN). A J domain is found at 361-431 (DYYKILGVSK…KKKRQYDMGQ (71 aa)). The disordered stretch occupies residues 512 to 539 (MGGGFGGHSGHSHGGSRSRSSRGGNEYR). Residues 521 to 531 (GHSHGGSRSRS) show a composition bias toward basic residues.

In Dictyostelium discoideum (Social amoeba), this protein is DnaJ homolog subfamily C member 7 homolog (dnajc7).